The following is a 285-amino-acid chain: MASLRDIKKRINATKKTSQITKAMEMVSASKLNRAEMNAKSFVPYMDKMQEVVANIALGAGNATHPMLVTRPVKKTGYLVITSDRGLAGAYNSNVLRTVYQTIQQRHQSPDEYAIIVIGRVGLSFFKKRNFPVILNITGLPDQPSFADIKEIANKAVGLFADGTFDELYMYYNHYVSAIQQEVTERKLLPLTDLVDNKQRTTYEFEPSQEEILDVLLPQYAESLIYGALLDAKASEHAARMTAMKNATDNAHELIRTLTLSYNRARQAAITQEITEIVAGANALQ.

The protein belongs to the ATPase gamma chain family. In terms of assembly, F-type ATPases have 2 components, CF(1) - the catalytic core - and CF(0) - the membrane proton channel. CF(1) has five subunits: alpha(3), beta(3), gamma(1), delta(1), epsilon(1). CF(0) has three main subunits: a, b and c.

It is found in the cell membrane. In terms of biological role, produces ATP from ADP in the presence of a proton gradient across the membrane. The gamma chain is believed to be important in regulating ATPase activity and the flow of protons through the CF(0) complex. This Geobacillus sp. (strain WCH70) protein is ATP synthase gamma chain.